Reading from the N-terminus, the 682-residue chain is Amphiphysin (682 aa).

2 coiled-coil regions span residues 10-84 (AKNV…LHEV) and 144-191 (DYDS…QEEL). The BAR domain maps to 24–240 (VLQKLGKADE…MTKLGDQHAD (217 aa)). Disordered stretches follow at residues 244–310 (TIQG…PKLT), 446–470 (ILAE…ETTG), 501–530 (GAVR…QEKV), and 561–606 (AAAE…ASDM). The span at 261–274 (PSPPEEVSPLPSPT) shows a compositional bias: pro residues. Over residues 503–527 (VRTEQEAAAEGDKPQGEEKDVDVSQ) the composition is skewed to basic and acidic residues. Residues 567 to 596 (TQGTDSETSQIGSEQKATEEIQTTPSQDQP) are compositionally biased toward polar residues. The region spanning 609-682 (GFLFKVEVLH…FPENFTRHLE (74 aa)) is the SH3 domain.

As to quaternary structure, heterodimer with BIN1. Binds SH3GLB1. As to expression, is abundant in the forebrain and cerebellum. It is also found in the adrenal gland, anterior and posterior pituitary.

It localises to the cytoplasmic vesicle. It is found in the secretory vesicle. The protein localises to the synaptic vesicle membrane. The protein resides in the cytoplasm. Its subcellular location is the cytoskeleton. May participate in mechanisms of regulated exocytosis in synapses and certain endocrine cell types. May control the properties of the membrane associated cytoskeleton. The chain is Amphiphysin (AMPH) from Gallus gallus (Chicken).